The following is a 61-amino-acid chain: Beta-defensin 133 (61 aa).

Positions 1–23 (MKIHVFLFVLFFFLVPIATRVKC) are cleaved as a signal peptide. 2 cysteine pairs are disulfide-bonded: cysteine 31/cysteine 59 and cysteine 38/cysteine 52.

Belongs to the beta-defensin family.

Its subcellular location is the secreted. In terms of biological role, has antibacterial activity. This Homo sapiens (Human) protein is Beta-defensin 133 (DEFB133).